A 209-amino-acid chain; its full sequence is Transcription antitermination protein NusB (209 aa).

The protein belongs to the NusB family.

Its function is as follows. Involved in transcription antitermination. Required for transcription of ribosomal RNA (rRNA) genes. Binds specifically to the boxA antiterminator sequence of the ribosomal RNA (rrn) operons. This is Transcription antitermination protein NusB from Cyanothece sp. (strain PCC 7425 / ATCC 29141).